The primary structure comprises 234 residues: 2,3-bisphosphoglycerate-dependent phosphoglycerate mutase 1 (234 aa).

Substrate is bound by residues 14-21 (RHGQSIWN), 27-28 (TG), Arg66, and 93-96 (ERHY). His15 serves as the catalytic Tele-phosphohistidine intermediate. The active-site Proton donor/acceptor is Glu93.

Belongs to the phosphoglycerate mutase family. BPG-dependent PGAM subfamily. As to quaternary structure, homodimer.

It catalyses the reaction (2R)-2-phosphoglycerate = (2R)-3-phosphoglycerate. Its pathway is carbohydrate degradation; glycolysis; pyruvate from D-glyceraldehyde 3-phosphate: step 3/5. Functionally, catalyzes the interconversion of 2-phosphoglycerate and 3-phosphoglycerate. This Nitrosomonas europaea (strain ATCC 19718 / CIP 103999 / KCTC 2705 / NBRC 14298) protein is 2,3-bisphosphoglycerate-dependent phosphoglycerate mutase 1.